Here is a 287-residue protein sequence, read N- to C-terminus: UTP--glucose-1-phosphate uridylyltransferase 1 (287 aa).

Belongs to the UDPGP type 2 family.

It carries out the reaction alpha-D-glucose 1-phosphate + UTP + H(+) = UDP-alpha-D-glucose + diphosphate. The protein operates within glycolipid metabolism; diglucosyl-diacylglycerol biosynthesis. In terms of biological role, catalyzes the formation of UDP-glucose from glucose-1-phosphate and UTP. This is an intermediate step in the biosynthesis of diglucosyl-diacylglycerol (Glc2-DAG), i.e. a glycolipid found in the membrane, which is also used as a membrane anchor for lipoteichoic acid (LTA). The chain is UTP--glucose-1-phosphate uridylyltransferase 1 (gtaB1) from Staphylococcus saprophyticus subsp. saprophyticus (strain ATCC 15305 / DSM 20229 / NCIMB 8711 / NCTC 7292 / S-41).